A 370-amino-acid chain; its full sequence is Formate dehydrogenase (370 aa).

Substrate contacts are provided by Ile94 and Asn120. Residues Arg175–Ile176, Asp196, Pro231–Ser235, Thr257, Asp283, and His312–Gly315 contribute to the NAD(+) site.

The protein belongs to the D-isomer specific 2-hydroxyacid dehydrogenase family. FDH subfamily. As to quaternary structure, homodimer.

It is found in the cytoplasm. The catalysed reaction is formate + NAD(+) = CO2 + NADH. Functionally, catalyzes the NAD(+)-dependent oxidation of formate to carbon dioxide. Formate oxidation is the final step in the methanol oxidation pathway in methylotrophic microorganisms. Has a role in the detoxification of exogenous formate in non-methylotrophic organisms. This chain is Formate dehydrogenase, found in Chaetomium thermophilum (strain DSM 1495 / CBS 144.50 / IMI 039719) (Thermochaetoides thermophila).